Reading from the N-terminus, the 1888-residue chain is Fatty acid synthase subunit alpha (1888 aa).

A disordered region spans residues 98–118 (DLAPVEEPNAEEQTGAAATPA). The Carrier domain occupies 146–221 (VKASLLLHVL…ETFQDTFAGS (76 aa)). Ser181 carries the O-(pantetheine 4'-phosphoryl)serine modification. Positions 675–874 (DKYVLITGAG…CGAIIGWTRG (200 aa)) are beta-ketoacyl reductase. Positions 1119-1657 (KQMIQEVVIE…QKGAQAVAVH (539 aa)) constitute a Ketosynthase family 3 (KS3) domain. Catalysis depends on for beta-ketoacyl synthase activity residues Cys1305, His1542, and His1583. Asp1774, Val1775, and Glu1776 together coordinate Mg(2+). Acetyl-CoA is bound by residues 1774–1776 (DVE), Tyr1800, Ser1810, 1819–1829 (EAVFKSLGVKS), 1843–1846 (REAG), and 1873–1875 (ISH). Residues Ser1874 and His1875 each contribute to the Mg(2+) site.

Belongs to the thiolase-like superfamily. Fungal fatty acid synthetase subunit alpha family. Fatty acid synthase is composed of alpha and beta subunits.

It catalyses the reaction acetyl-CoA + n malonyl-CoA + 2n NADPH + 4n H(+) = a long-chain-acyl-CoA + n CoA + n CO2 + 2n NADP(+).. It carries out the reaction a fatty acyl-[ACP] + malonyl-[ACP] + H(+) = a 3-oxoacyl-[ACP] + holo-[ACP] + CO2. The enzyme catalyses a (3R)-hydroxyacyl-[ACP] + NADP(+) = a 3-oxoacyl-[ACP] + NADPH + H(+). Fatty acid synthetase catalyzes the formation of long-chain fatty acids from acetyl-CoA, malonyl-CoA and NADPH. The alpha subunit contains domains for: acyl carrier protein, 3-oxoacyl-[acyl-carrier-protein] reductase, and 3-oxoacyl-[acyl-carrier-protein] synthase. In this species, higher amounts of C18 than C16 fatty acids are produced. The protein is Fatty acid synthase subunit alpha (FAS2) of Lachancea kluyveri (Yeast).